Reading from the N-terminus, the 436-residue chain is MSKYLLMSFTEGSMSTWHYLAMLTTIWLVYQYLKPVPIVPGLPVINRAERWDFFSIKMKRRFLNNAAALMKEGFEQPKLVLSPDYADELKNDARFSLEDAGLRRHYRMKPASLFKIIGQTTPISGRAFLGPEVCGDIRWIEATMGYLEMGVRTAFLLQVFPRFLFPLQRWFPLCRKVRKHIDMAGTILRPVIDSRRADGRPAQDAISWFDEAAAGETYNPVYSQLSLSFASTHTTADTMTKVIIHLAENPAVVTDLRKEVVEAIAKHGELTKTALSQMNLLDSTLKESQRLEPLASATMNRVTREEVTLSNGLWIPRNMYVLVSGHRMRDPTLYPDPEKFDAYRFVKMREIEKKKSDCAYTAATVDHMGFGYGKHSCPGRFFAAHEVKIILCHLILKYEFKLPEDQARTYLLAGFFTSAGPENELLVRRRVEEIAL.

Cysteine 377 contacts heme.

This sequence belongs to the cytochrome P450 family. It depends on heme as a cofactor.

It participates in alkaloid biosynthesis. Functionally, cytochrome P450 monooxygenase; part of the gene cluster that mediates the biosynthesis of paraherquamide, a fungal indole alkaloid that belongs to a family of natural products containing a characteristic bicyclo[2.2.2]diazaoctane core. The first steps in the biosynthesis of paraherquamide is the production of the beta-methyl-proline precursor from L-isoleucine. They require oxidation of a terminally hydroxylated L-isoleucine to the corresponding aldehyde by enzymes which have still to be identified. Spontaneous cyclization and dehydration would yield the 4-methyl pyrolline-5-carboxylic acid, which is then reduced by the pyrroline-5-carboxylate reductase phqD leading to the beta-methyl-proline precursor. The next step of paraherquamide biosynthesis involves coupling of beta-methyl-proline and L-tryptophan by the bimodular NRPS phqB, to produce a monooxopiperazine intermediate. The reductase (R) domain of phqB utilizes NADPH for hydride transfer to reduce the thioester bond of the T domain-tethered linear dipeptide to a hemithioaminal intermediate, which spontaneously cleaves the C-S bond to release the aldehyde product. This compound undergoes spontaneous cyclization and dehydration to give a dienamine which is reverse prenylated at C-2 by the reverse prenyltransferase phqJ. The other prenyltransferase present in the cluster, phqI may be a redundant gene in the pathway. During biosynthetic assembly, the key step to produce the polycyclic core is catalyzed by the bifunctional reductase and intramolecular [4+2] Diels-Alderase, phqE, resulting in formation of the [2.2.2] diazaoctane intermediate preparaherquamide. Following formation of preparaherquamide, an indole 2,3-epoxidation-initiated pinacol-like rearrangement is catalyzed by the phqK FAD-dependent monooxygenase. The prenyltransferase phqA, the cytochrome P450 monooxygenase phqL, and the FAD-linked oxidoreductase phqH (or the cytochrome P450 monooxygenase phqM), are proposed to be involved in the formation of the pyran ring. The FAD-dependent monooxygenase phqK is likely responsible for generation of the spiro-oxindole, and the N-methylation is likely mediated by the phqN methyltransferase leading to the isolable natural product paraherquamide F. However, the order of these biosynthetic steps has still to be determined. In late-stage paraherquamide biosynthesis, the third P450 monooxygenase, phqO, is probably responsible for the C-14 hydroxylation, transforming paraherquamide F to paraherquamide G, and paraherquamide E to the final product paraherquamide A. The expansion from the 6-membered ring pyran (in paraherquamides F and G) to the 7-membered dioxepin ring (in paraherquamides A and E) represents a poorly understood but intriguing process that probably involves the 2-oxoglutarate-dependent dioxygenase phqC. Finally, the remaining members of the paraherquamide cluster, including phqI as well as phqM (or phqH), do not have a clearly prescribed role and appear to be redundant. The protein is Cytochrome P450 monooxygenase phqO of Penicillium fellutanum.